Consider the following 121-residue polypeptide: MGIKYSNKINKIRTFALSLVFLGILVMYIGIFFRTHEVIMVLAMILGFLCIIASTAVYFWIGMISTRAIPVVCPECGKPTKVLGRVDACMHCDQPLTLDRSLEGKEFDEKYNLKGKKRVDG.

A run of 2 helical transmembrane segments spans residues 12 to 32 (IRTF…IGIF) and 41 to 61 (VLAM…YFWI).

Belongs to the UPF0295 family.

The protein localises to the cell membrane. In Halalkalibacterium halodurans (strain ATCC BAA-125 / DSM 18197 / FERM 7344 / JCM 9153 / C-125) (Bacillus halodurans), this protein is UPF0295 protein BH0952.